The primary structure comprises 623 residues: tRNA uridine 5-carboxymethylaminomethyl modification enzyme MnmG (623 aa).

Position 12-17 (12-17 (GAGHAG)) interacts with FAD. 272 to 286 (GPRYCPSIEDKINRF) contributes to the NAD(+) binding site.

This sequence belongs to the MnmG family. In terms of assembly, homodimer. Heterotetramer of two MnmE and two MnmG subunits. FAD is required as a cofactor.

The protein localises to the cytoplasm. Functionally, NAD-binding protein involved in the addition of a carboxymethylaminomethyl (cmnm) group at the wobble position (U34) of certain tRNAs, forming tRNA-cmnm(5)s(2)U34. The protein is tRNA uridine 5-carboxymethylaminomethyl modification enzyme MnmG of Christiangramia forsetii (strain DSM 17595 / CGMCC 1.15422 / KT0803) (Gramella forsetii).